A 362-amino-acid chain; its full sequence is Innexin-17 (362 aa).

4 helical membrane passes run tyrosine 27–glycine 47, tryptophan 101–asparagine 121, phenylalanine 189–glycine 209, and leucine 266–phenylalanine 286.

Belongs to the pannexin family.

The protein resides in the cell membrane. It localises to the cell junction. The protein localises to the gap junction. Its function is as follows. Structural component of the gap junctions. The polypeptide is Innexin-17 (Caenorhabditis elegans).